The chain runs to 118 residues: Large ribosomal subunit protein eL18 (118 aa).

Belongs to the eukaryotic ribosomal protein eL18 family.

This chain is Large ribosomal subunit protein eL18, found in Sulfurisphaera tokodaii (strain DSM 16993 / JCM 10545 / NBRC 100140 / 7) (Sulfolobus tokodaii).